The following is a 211-amino-acid chain: SsrA-binding protein (211 aa).

The disordered stretch occupies residues 168-211; the sequence is KHRLRRPRAQRNTQRSVTPRRTRENKNVRGSKARSARRNVRREN. Residues 177-186 show a composition bias toward polar residues; it reads QRNTQRSVTP. The span at 196 to 211 shows a compositional bias: basic residues; the sequence is RGSKARSARRNVRREN.

Belongs to the SmpB family.

It localises to the cytoplasm. Required for rescue of stalled ribosomes mediated by trans-translation. Binds to transfer-messenger RNA (tmRNA), required for stable association of tmRNA with ribosomes. tmRNA and SmpB together mimic tRNA shape, replacing the anticodon stem-loop with SmpB. tmRNA is encoded by the ssrA gene; the 2 termini fold to resemble tRNA(Ala) and it encodes a 'tag peptide', a short internal open reading frame. During trans-translation Ala-aminoacylated tmRNA acts like a tRNA, entering the A-site of stalled ribosomes, displacing the stalled mRNA. The ribosome then switches to translate the ORF on the tmRNA; the nascent peptide is terminated with the 'tag peptide' encoded by the tmRNA and targeted for degradation. The ribosome is freed to recommence translation, which seems to be the essential function of trans-translation. This chain is SsrA-binding protein, found in Tropheryma whipplei (strain Twist) (Whipple's bacillus).